Consider the following 502-residue polypeptide: MTDQVQDENKLIAERRAKLDMIRKNCKANGHPNDFRRDSLAADLQATFGEKTKPELEEEGHIVAIAGRVMAKRGPFLAIQDVSGRIQAYADKTVQKELKEKYSGLDIGDIIGVKGQLHLSGKGDLYVTMDNYELLTKALRPLPEKFHGLTDQETRYRQRYVDLIVNEDSRNTMIMRSKVVSAIRNFMMKKDFMEVETPMMHVIPGGATARPFITHHNALDIDMYLRVAPELYLKRLVVGGFERVFEINRNFRNEGLSPRHNPEFTMMEFYMAYADYNDLMDLTEEMLSSIATDLHGSPKLPYGDAIVDFGGPYPRISMLNAIKQYNPDNAEIQALTYEQVADRELMANIARGLDIYVEKFWTCGQLLEEIFGETAEPQLMQPTFITEYPADISPLARRNDTNDFITDRFEFFIGGREVANGFSELNDAQDQDQRFKAQVNAKDAGDDEAMYYDADYITALEHGLPPTAGQGIGIDRLVMLFTNTHTIRDVILFPALRPQNKA.

Residues Glu-410 and Glu-417 each coordinate Mg(2+).

The protein belongs to the class-II aminoacyl-tRNA synthetase family. In terms of assembly, homodimer. Mg(2+) is required as a cofactor.

Its subcellular location is the cytoplasm. The enzyme catalyses tRNA(Lys) + L-lysine + ATP = L-lysyl-tRNA(Lys) + AMP + diphosphate. This chain is Lysine--tRNA ligase, found in Photobacterium profundum (strain SS9).